A 470-amino-acid chain; its full sequence is ATP synthase subunit beta (470 aa).

An ATP-binding site is contributed by 155–162; sequence GGAGVGKT.

It belongs to the ATPase alpha/beta chains family. As to quaternary structure, F-type ATPases have 2 components, CF(1) - the catalytic core - and CF(0) - the membrane proton channel. CF(1) has five subunits: alpha(3), beta(3), gamma(1), delta(1), epsilon(1). CF(0) has three main subunits: a(1), b(2) and c(9-12). The alpha and beta chains form an alternating ring which encloses part of the gamma chain. CF(1) is attached to CF(0) by a central stalk formed by the gamma and epsilon chains, while a peripheral stalk is formed by the delta and b chains.

It is found in the cell membrane. It catalyses the reaction ATP + H2O + 4 H(+)(in) = ADP + phosphate + 5 H(+)(out). Its function is as follows. Produces ATP from ADP in the presence of a proton gradient across the membrane. The catalytic sites are hosted primarily by the beta subunits. In Staphylococcus haemolyticus (strain JCSC1435), this protein is ATP synthase subunit beta.